Reading from the N-terminus, the 543-residue chain is Chaperonin GroEL (543 aa).

ATP is bound by residues 29 to 32, 86 to 90, Gly-413, 478 to 480, and Asp-494; these read TLGP, DGTTT, and NAA.

The protein belongs to the chaperonin (HSP60) family. Forms a cylinder of 14 subunits composed of two heptameric rings stacked back-to-back. Interacts with the co-chaperonin GroES.

It is found in the cytoplasm. The catalysed reaction is ATP + H2O + a folded polypeptide = ADP + phosphate + an unfolded polypeptide.. Its function is as follows. Together with its co-chaperonin GroES, plays an essential role in assisting protein folding. The GroEL-GroES system forms a nano-cage that allows encapsulation of the non-native substrate proteins and provides a physical environment optimized to promote and accelerate protein folding. In Lactobacillus gasseri (strain ATCC 33323 / DSM 20243 / BCRC 14619 / CIP 102991 / JCM 1131 / KCTC 3163 / NCIMB 11718 / NCTC 13722 / AM63), this protein is Chaperonin GroEL.